The chain runs to 159 residues: S-ribosylhomocysteine lyase 1 (159 aa).

Residues His54, His58, and Cys124 each coordinate Fe cation.

It belongs to the LuxS family. In terms of assembly, homodimer. Fe cation is required as a cofactor.

The catalysed reaction is S-(5-deoxy-D-ribos-5-yl)-L-homocysteine = (S)-4,5-dihydroxypentane-2,3-dione + L-homocysteine. Its function is as follows. Involved in the synthesis of autoinducer 2 (AI-2) which is secreted by bacteria and is used to communicate both the cell density and the metabolic potential of the environment. The regulation of gene expression in response to changes in cell density is called quorum sensing. Catalyzes the transformation of S-ribosylhomocysteine (RHC) to homocysteine (HC) and 4,5-dihydroxy-2,3-pentadione (DPD). The chain is S-ribosylhomocysteine lyase 1 from Lactobacillus delbrueckii subsp. bulgaricus (strain ATCC BAA-365 / Lb-18).